A 286-amino-acid chain; its full sequence is Bifunctional protein FolD (286 aa).

NADP(+) is bound by residues 165–167 (GRS), S190, and V231.

Belongs to the tetrahydrofolate dehydrogenase/cyclohydrolase family. In terms of assembly, homodimer.

It catalyses the reaction (6R)-5,10-methylene-5,6,7,8-tetrahydrofolate + NADP(+) = (6R)-5,10-methenyltetrahydrofolate + NADPH. The enzyme catalyses (6R)-5,10-methenyltetrahydrofolate + H2O = (6R)-10-formyltetrahydrofolate + H(+). The protein operates within one-carbon metabolism; tetrahydrofolate interconversion. Functionally, catalyzes the oxidation of 5,10-methylenetetrahydrofolate to 5,10-methenyltetrahydrofolate and then the hydrolysis of 5,10-methenyltetrahydrofolate to 10-formyltetrahydrofolate. The sequence is that of Bifunctional protein FolD from Bacillus cereus (strain ATCC 14579 / DSM 31 / CCUG 7414 / JCM 2152 / NBRC 15305 / NCIMB 9373 / NCTC 2599 / NRRL B-3711).